The sequence spans 1102 residues: ATP-dependent DNA helicase MPH1 (1102 aa).

A disordered region spans residues 19-55; the sequence is ALDKPATSGLHSREQEQQRDISNATPHTSTDLELEDF. Positions 38–49 are enriched in polar residues; the sequence is DISNATPHTSTD. In terms of domain architecture, Helicase ATP-binding spans 147 to 315; the sequence is IVKNGLFNNT…DVIDNLGVSH (169 aa). An ATP-binding site is contributed by 160–167; it reads LPTGLGKT. The DEAH box signature appears at 263–266; the sequence is DEAH. Residues 490–651 enclose the Helicase C-terminal domain; it reads NLLNYFMDAG…GSRFNFRHDL (162 aa). Disordered regions lie at residues 672–702, 720–743, 818–837, and 858–1102; these read PIEN…FNMP, ASKT…DEIS, SQGI…KSRY, and SGRK…SESG. Over residues 687–699 the composition is skewed to basic residues; it reads RSTRGKKASKKKF. Residues 822–837 are compositionally biased toward basic and acidic residues; it reads ETRHTKPHGDTDKSRY. Over residues 1003–1019 the composition is skewed to low complexity; it reads SSGAASKSGSTASTAAK. The segment covering 1069–1082 has biased composition (acidic residues); it reads SDDDDDDNDDEDDV.

The protein belongs to the DEAD box helicase family. DEAH subfamily. FANCM sub-subfamily. In terms of assembly, interacts with the MHF histone-fold complex to form the FANCM-MHF complex.

It localises to the nucleus. The enzyme catalyses ATP + H2O = ADP + phosphate + H(+). ATP-dependent DNA helicase involved in DNA damage repair by homologous recombination and in genome maintenance. Capable of unwinding D-loops. Plays a role in limiting crossover recombinants during mitotic DNA double-strand break (DSB) repair. Component of a FANCM-MHF complex which promotes gene conversion at blocked replication forks, probably by reversal of the stalled fork. This chain is ATP-dependent DNA helicase MPH1, found in Pyricularia oryzae (strain 70-15 / ATCC MYA-4617 / FGSC 8958) (Rice blast fungus).